We begin with the raw amino-acid sequence, 99 residues long: (4S)-4-hydroxy-5-phosphonooxypentane-2,3-dione isomerase (99 aa).

Residues 2-91 (HVTLVEINVK…ISEPRKKRSF (90 aa)) enclose the ABM domain.

It belongs to the LsrG family. Homodimer.

The protein localises to the cytoplasm. The enzyme catalyses (2S)-2-hydroxy-3,4-dioxopentyl phosphate = 3-hydroxy-2,4-dioxopentyl phosphate. Involved in the degradation of phospho-AI-2, thereby terminating induction of the lsr operon and closing the AI-2 signaling cycle. Catalyzes the conversion of (4S)-4-hydroxy-5-phosphonooxypentane-2,3-dione (P-DPD) to 3-hydroxy-5-phosphonooxypentane-2,4-dione (P-HPD). This chain is (4S)-4-hydroxy-5-phosphonooxypentane-2,3-dione isomerase, found in Photorhabdus laumondii subsp. laumondii (strain DSM 15139 / CIP 105565 / TT01) (Photorhabdus luminescens subsp. laumondii).